The chain runs to 511 residues: Histidine ammonia-lyase 2 (511 aa).

The 5-imidazolinone (Ser-Gly) cross-link spans 144-146 (SSG). Ser-145 is subject to 2,3-didehydroalanine (Ser).

This sequence belongs to the PAL/histidase family. In terms of processing, contains an active site 4-methylidene-imidazol-5-one (MIO), which is formed autocatalytically by cyclization and dehydration of residues Ser-Ser-Gly.

Its subcellular location is the cytoplasm. It catalyses the reaction L-histidine = trans-urocanate + NH4(+). The protein operates within amino-acid degradation; L-histidine degradation into L-glutamate; N-formimidoyl-L-glutamate from L-histidine: step 1/3. This Fusobacterium nucleatum subsp. nucleatum (strain ATCC 25586 / DSM 15643 / BCRC 10681 / CIP 101130 / JCM 8532 / KCTC 2640 / LMG 13131 / VPI 4355) protein is Histidine ammonia-lyase 2 (hutH2).